The following is a 65-amino-acid chain: SPbeta prophage-derived uncharacterized protein YopU (65 aa).

In Bacillus subtilis (strain 168), this protein is SPbeta prophage-derived uncharacterized protein YopU (yopU).